A 508-amino-acid chain; its full sequence is Ankyrin repeat domain-containing protein 34B (508 aa).

ANK repeat units follow at residues 9–38 (TDGN…YINE), 42–79 (RGET…DPNI), 83–113 (SGKS…DLSL), and 117–146 (SGYS…AKGK). The segment at 157 to 185 (PSGRHTTQHHLNMPPADMDGSHPPATPSE) is disordered. Position 260 is a phosphoserine (S260). Phosphothreonine is present on T269. S293 bears the Phosphoserine mark. A compositionally biased stretch (polar residues) spans 361 to 370 (GANHYSSDSQ). The disordered stretch occupies residues 361–380 (GANHYSSDSQLAEGVTPPTV).

The protein belongs to the ANKRD34 family. In terms of processing, phosphorylated. As to expression, specifically and constitutively expressed in brain (at protein level).

It is found in the cytoplasm. It localises to the nucleus. This Mus musculus (Mouse) protein is Ankyrin repeat domain-containing protein 34B (Ankrd34b).